Reading from the N-terminus, the 483-residue chain is Pre-glycoprotein polyprotein GP complex (483 aa).

G2 is lipidated: N-myristoyl glycine; by host. Residues 2-17 are Extracellular-facing; sequence GQLVSFIGEIPAIVHE. Residues 18–32 traverse the membrane as a helical segment; the sequence is ALNVALIAVSIIAIM. Position 33 (K33) is a topological domain, cytoplasmic. A helical transmembrane segment spans residues 34–53; the sequence is GLINIWKSGLFQLIMFLILA. 2 consecutive stretches face the extracellular side: residues 54–58 and 59–422; these read GRSCS and ISIG…SLVD. Position 57 (C57) interacts with Zn(2+). N-linked (GlcNAc...) asparagine; by host glycans are attached at residues N73, N88, N130, and N179. 5 disulfides stabilise this stretch: C85–C223, C186–C204, C269–C282, C291–C300, and C354–C375. A glycan (N-linked (GlcNAc...) asparagine; by host) is linked at N216. N-linked (GlcNAc...) asparagine; by host glycans are attached at residues N355, N363, N380, and N385. The chain crosses the membrane as a helical span at residues 423–443; that stretch reads LCFWSTLFYTASIFLHLLHIP. Residues 444 to 483 are Cytoplasmic-facing; the sequence is THRHIIGEGCPKPHRLTSDSLCACGFFQLKGRPTRWARIP. Residues H445, H447, C453, H457, C465, and C467 each coordinate Zn(2+).

It belongs to the arenaviridae GPC protein family. As to quaternary structure, homotetramer; disulfide-linked. Homotetramer. GP2 homotetramers bind through ionic interactions with GP1 homotetramers to form the GP complex together with the stable signal peptide. The GP-C polyprotein interacts with the host protease MBTPS1/SKI-1 resulting in the polyprotein processing. Post-translationally, specific enzymatic cleavages in vivo yield mature proteins. GP-C polyprotein is cleaved in the endoplasmic reticulum by the host protease MBTPS1. Only cleaved glycoprotein is incorporated into virions. In terms of processing, the SSP remains stably associated with the GP complex following cleavage by signal peptidase and plays crucial roles in the trafficking of GP through the secretory pathway. Myristoylation is necessary for GP2-mediated fusion activity.

It localises to the virion membrane. The protein localises to the host endoplasmic reticulum membrane. The protein resides in the host Golgi apparatus membrane. Its subcellular location is the host cell membrane. Class I viral fusion protein that directs fusion of viral and host endosomal membranes, leading to delivery of the nucleocapsid into the cytoplasm. Membrane fusion is mediated by irreversible conformational changes induced upon acidification in the endosome. Its function is as follows. Stable signal peptide (SSP): cleaved and functions as a signal peptide. In addition, it is also retained as the third component of the GP complex. The SSP is required for efficient glycoprotein expression, post-translational maturation cleavage of GP1 and GP2, glycoprotein transport to the cell surface plasma membrane, formation of infectious virus particles, and acid pH-dependent glycoprotein-mediated cell fusion. In terms of biological role, interacts with the host receptor. The chain is Pre-glycoprotein polyprotein GP complex from Peromyscus californicus (California mouse).